The sequence spans 318 residues: Transaldolase (318 aa).

The Schiff-base intermediate with substrate role is filled by K126.

This sequence belongs to the transaldolase family. Type 1 subfamily. As to quaternary structure, homodimer.

It is found in the cytoplasm. The catalysed reaction is D-sedoheptulose 7-phosphate + D-glyceraldehyde 3-phosphate = D-erythrose 4-phosphate + beta-D-fructose 6-phosphate. It functions in the pathway carbohydrate degradation; pentose phosphate pathway; D-glyceraldehyde 3-phosphate and beta-D-fructose 6-phosphate from D-ribose 5-phosphate and D-xylulose 5-phosphate (non-oxidative stage): step 2/3. Its function is as follows. Transaldolase is important for the balance of metabolites in the pentose-phosphate pathway. The sequence is that of Transaldolase from Cupriavidus metallidurans (strain ATCC 43123 / DSM 2839 / NBRC 102507 / CH34) (Ralstonia metallidurans).